Reading from the N-terminus, the 194-residue chain is 7-methyl-GTP pyrophosphatase (194 aa).

The Proton acceptor role is filled by Asp70.

It belongs to the Maf family. YceF subfamily. Requires a divalent metal cation as cofactor.

The protein localises to the cytoplasm. The enzyme catalyses N(7)-methyl-GTP + H2O = N(7)-methyl-GMP + diphosphate + H(+). In terms of biological role, nucleoside triphosphate pyrophosphatase that hydrolyzes 7-methyl-GTP (m(7)GTP). May have a dual role in cell division arrest and in preventing the incorporation of modified nucleotides into cellular nucleic acids. The sequence is that of 7-methyl-GTP pyrophosphatase from Vibrio vulnificus (strain YJ016).